Reading from the N-terminus, the 916-residue chain is DNA ligase 1 (916 aa).

A compositionally biased stretch (polar residues) spans 1–10; that stretch reads MQRSIMSFFQ. Positions 1-197 are disordered; that stretch reads MQRSIMSFFQ…SPESVTLTKT (197 aa). Basic and acidic residues predominate over residues 13–43; sequence KEGKAKKPEKETPSSIREKEPPPKVALKERN. S49, S51, and S65 each carry phosphoserine. At T77 the chain carries Phosphothreonine. The span at 99-111 shows a compositional bias: polar residues; it reads PENSPVFNCSSPM. Residues 119 to 129 are compositionally biased toward basic residues; it reads PKRRTARKQLP. K144 carries the post-translational modification N6-acetyllysine. Residues 153–177 show a composition bias toward basic and acidic residues; it reads KEEETPKESLAEAEDIKQKEEKEGD. The span at 185–197 shows a compositional bias: polar residues; that stretch reads PTKSPESVTLTKT. Position 193 is a phosphothreonine (T193). K225 is modified (N6-acetyllysine). Phosphoserine occurs at positions 228 and 229. T232 bears the Phosphothreonine mark. The interval 236-266 is disordered; that stretch reads PAVKTEVKQEESGTLRKEETKGTLDPANYNP. Residues 238–257 are compositionally biased toward basic and acidic residues; sequence VKTEVKQEESGTLRKEETKG. Residues 447-456 form an interaction with target DNA region; that stretch reads RLRLGLAEQS. E564 is an ATP binding site. K566 acts as the N6-AMP-lysine intermediate in catalysis. 2 residues coordinate ATP: R571 and E619. E619 serves as a coordination point for Mg(2+). The segment at 640 to 642 is interaction with target DNA; it reads KRK. E718 provides a ligand contact to Mg(2+). Positions 723 and 742 each coordinate ATP. T796 is subject to Phosphothreonine. Phosphoserine is present on residues S799, S906, S907, and S911. A disordered region spans residues 879–916; it reads DKQPEQATTSNQVASLYRKQSQIQNQQSSDLDSDVEDY. Positions 883-908 are enriched in polar residues; it reads EQATTSNQVASLYRKQSQIQNQQSSD.

The protein belongs to the ATP-dependent DNA ligase family. Interacts with PCNA. Interacts with POLB. It depends on Mg(2+) as a cofactor.

It is found in the nucleus. The enzyme catalyses ATP + (deoxyribonucleotide)n-3'-hydroxyl + 5'-phospho-(deoxyribonucleotide)m = (deoxyribonucleotide)n+m + AMP + diphosphate.. Its function is as follows. DNA ligase that seals nicks in double-stranded during DNA repair. Also involved in DNA replication and DNA recombination. The chain is DNA ligase 1 (Lig1) from Mus musculus (Mouse).